The primary structure comprises 451 residues: Eukaryotic translation initiation factor 3 subunit E (451 aa).

The PCI domain occupies 256 to 425 (TDLFFSPAYI…GTVIMNHPPQ (170 aa)).

It belongs to the eIF-3 subunit E family. As to quaternary structure, component of the eukaryotic translation initiation factor 3 (eIF-3) complex.

Its subcellular location is the cytoplasm. Its function is as follows. Component of the eukaryotic translation initiation factor 3 (eIF-3) complex, which is involved in protein synthesis of a specialized repertoire of mRNAs and, together with other initiation factors, stimulates binding of mRNA and methionyl-tRNAi to the 40S ribosome. The eIF-3 complex specifically targets and initiates translation of a subset of mRNAs involved in cell proliferation. The chain is Eukaryotic translation initiation factor 3 subunit E (int6) from Aspergillus fumigatus (strain CBS 144.89 / FGSC A1163 / CEA10) (Neosartorya fumigata).